The sequence spans 391 residues: GTPase Obg (391 aa).

The region spanning 1-159 is the Obg domain; that stretch reads MKFIDEALIR…RDLLLELMLL (159 aa). Residues 160-333 form the OBG-type G domain; the sequence is ADVGMLGLPN…LTRDIMDFIE (174 aa). GTP contacts are provided by residues 166 to 173, 191 to 195, 213 to 216, 283 to 286, and 314 to 316; these read GLPNAGKS, FTTLV, DIPG, NKID, and SAA. Ser-173 and Thr-193 together coordinate Mg(2+).

The protein belongs to the TRAFAC class OBG-HflX-like GTPase superfamily. OBG GTPase family. Monomer. Mg(2+) serves as cofactor.

It is found in the cytoplasm. Its function is as follows. An essential GTPase which binds GTP, GDP and possibly (p)ppGpp with moderate affinity, with high nucleotide exchange rates and a fairly low GTP hydrolysis rate. Plays a role in control of the cell cycle, stress response, ribosome biogenesis and in those bacteria that undergo differentiation, in morphogenesis control. This chain is GTPase Obg, found in Actinobacillus pleuropneumoniae serotype 5b (strain L20).